The following is a 185-amino-acid chain: Ribosome-recycling factor (185 aa).

This sequence belongs to the RRF family.

The protein resides in the cytoplasm. Functionally, responsible for the release of ribosomes from messenger RNA at the termination of protein biosynthesis. May increase the efficiency of translation by recycling ribosomes from one round of translation to another. The chain is Ribosome-recycling factor from Geobacter metallireducens (strain ATCC 53774 / DSM 7210 / GS-15).